The chain runs to 218 residues: Phosphatidylserine decarboxylase proenzyme (218 aa).

The Schiff-base intermediate with substrate; via pyruvic acid role is filled by S187. A Pyruvic acid (Ser); by autocatalysis modification is found at S187.

Belongs to the phosphatidylserine decarboxylase family. PSD-A subfamily. Heterodimer of a large membrane-associated beta subunit and a small pyruvoyl-containing alpha subunit. The cofactor is pyruvate. Is synthesized initially as an inactive proenzyme. Formation of the active enzyme involves a self-maturation process in which the active site pyruvoyl group is generated from an internal serine residue via an autocatalytic post-translational modification. Two non-identical subunits are generated from the proenzyme in this reaction, and the pyruvate is formed at the N-terminus of the alpha chain, which is derived from the carboxyl end of the proenzyme. The post-translation cleavage follows an unusual pathway, termed non-hydrolytic serinolysis, in which the side chain hydroxyl group of the serine supplies its oxygen atom to form the C-terminus of the beta chain, while the remainder of the serine residue undergoes an oxidative deamination to produce ammonia and the pyruvoyl prosthetic group on the alpha chain.

It localises to the cell membrane. It carries out the reaction a 1,2-diacyl-sn-glycero-3-phospho-L-serine + H(+) = a 1,2-diacyl-sn-glycero-3-phosphoethanolamine + CO2. It functions in the pathway phospholipid metabolism; phosphatidylethanolamine biosynthesis; phosphatidylethanolamine from CDP-diacylglycerol: step 2/2. Catalyzes the formation of phosphatidylethanolamine (PtdEtn) from phosphatidylserine (PtdSer). This chain is Phosphatidylserine decarboxylase proenzyme, found in Geobacter sulfurreducens (strain ATCC 51573 / DSM 12127 / PCA).